The primary structure comprises 62 residues: Photosystem II reaction center protein Z (62 aa).

Transmembrane regions (helical) follow at residues 8–28 (ALAALVFFSFVMVIGVPFAYA) and 41–61 (WVGSGIWTILVIVVAVLNFFV).

Belongs to the PsbZ family. PSII is composed of 1 copy each of membrane proteins PsbA, PsbB, PsbC, PsbD, PsbE, PsbF, PsbH, PsbI, PsbJ, PsbK, PsbL, PsbM, PsbT, PsbX, PsbY, PsbZ, Psb30/Ycf12, peripheral proteins PsbO, CyanoQ (PsbQ), PsbU, PsbV and a large number of cofactors. It forms dimeric complexes.

Its subcellular location is the cellular thylakoid membrane. Functionally, may control the interaction of photosystem II (PSII) cores with the light-harvesting antenna, regulates electron flow through the 2 photosystem reaction centers. PSII is a light-driven water plastoquinone oxidoreductase, using light energy to abstract electrons from H(2)O, generating a proton gradient subsequently used for ATP formation. This chain is Photosystem II reaction center protein Z, found in Gloeothece citriformis (strain PCC 7424) (Cyanothece sp. (strain PCC 7424)).